The primary structure comprises 215 residues: Large ribosomal subunit protein uL3 (215 aa).

Residue Q151 is modified to N5-methylglutamine.

The protein belongs to the universal ribosomal protein uL3 family. As to quaternary structure, part of the 50S ribosomal subunit. Forms a cluster with proteins L14 and L19. In terms of processing, methylated by PrmB.

Functionally, one of the primary rRNA binding proteins, it binds directly near the 3'-end of the 23S rRNA, where it nucleates assembly of the 50S subunit. The polypeptide is Large ribosomal subunit protein uL3 (Rickettsia bellii (strain OSU 85-389)).